A 102-amino-acid polypeptide reads, in one-letter code: Integration host factor subunit beta (102 aa).

The tract at residues 54-102 is disordered; sequence HHRPARMGRNPKTGEPVALPAKYVPHFKPGKELRERVNSSRHQAPLRSQ. A compositionally biased stretch (basic and acidic residues) spans 82-91; that stretch reads PGKELRERVN. Polar residues predominate over residues 93 to 102; that stretch reads SRHQAPLRSQ.

Belongs to the bacterial histone-like protein family. Heterodimer of an alpha and a beta chain.

Its function is as follows. This protein is one of the two subunits of integration host factor, a specific DNA-binding protein that functions in genetic recombination as well as in transcriptional and translational control. In Halorhodospira halophila (strain DSM 244 / SL1) (Ectothiorhodospira halophila (strain DSM 244 / SL1)), this protein is Integration host factor subunit beta.